A 125-amino-acid chain; its full sequence is Holo-[acyl-carrier-protein] synthase (125 aa).

Mg(2+) contacts are provided by Asp8 and Glu60.

This sequence belongs to the P-Pant transferase superfamily. AcpS family. It depends on Mg(2+) as a cofactor.

It is found in the cytoplasm. The catalysed reaction is apo-[ACP] + CoA = holo-[ACP] + adenosine 3',5'-bisphosphate + H(+). Its function is as follows. Transfers the 4'-phosphopantetheine moiety from coenzyme A to a Ser of acyl-carrier-protein. The chain is Holo-[acyl-carrier-protein] synthase from Wolbachia sp. subsp. Brugia malayi (strain TRS).